The chain runs to 602 residues: Elongation factor 4 (602 aa).

Positions 7-189 (SKIRNFCIIA…AIVRRVPPPQ (183 aa)) constitute a tr-type G domain. Residues 19–24 (DHGKST) and 136–139 (NKVD) contribute to the GTP site.

The protein belongs to the TRAFAC class translation factor GTPase superfamily. Classic translation factor GTPase family. LepA subfamily.

It localises to the cell inner membrane. The enzyme catalyses GTP + H2O = GDP + phosphate + H(+). Functionally, required for accurate and efficient protein synthesis under certain stress conditions. May act as a fidelity factor of the translation reaction, by catalyzing a one-codon backward translocation of tRNAs on improperly translocated ribosomes. Back-translocation proceeds from a post-translocation (POST) complex to a pre-translocation (PRE) complex, thus giving elongation factor G a second chance to translocate the tRNAs correctly. Binds to ribosomes in a GTP-dependent manner. This chain is Elongation factor 4, found in Prochlorococcus marinus (strain MIT 9215).